A 151-amino-acid chain; its full sequence is Flagellar assembly factor FliW (151 aa).

Belongs to the FliW family. Interacts with translational regulator CsrA and flagellin(s).

Its subcellular location is the cytoplasm. Its function is as follows. Acts as an anti-CsrA protein, binds CsrA and prevents it from repressing translation of its target genes, one of which is flagellin. Binds to flagellin and participates in the assembly of the flagellum. The polypeptide is Flagellar assembly factor FliW (Halalkalibacterium halodurans (strain ATCC BAA-125 / DSM 18197 / FERM 7344 / JCM 9153 / C-125) (Bacillus halodurans)).